The chain runs to 58 residues: Small ribosomal subunit protein bS21 (58 aa).

A disordered region spans residues 36-58; the sequence is RHHETPVEKYKRKLQQRRRSRRR. The span at 45–58 shows a compositional bias: basic residues; that stretch reads YKRKLQQRRRSRRR.

The protein belongs to the bacterial ribosomal protein bS21 family.

The sequence is that of Small ribosomal subunit protein bS21 from Prochlorococcus marinus (strain NATL1A).